Reading from the N-terminus, the 318-residue chain is MNQLDALRQWTTVVADTGDFKQLAISRPQDATTNPSLILKAVQKPEYRPLLDEAVSKHAGKPLDEVIDRLLVRFGTEILSIIPGRVSTEVDARLSFDTAATVARGERIVALYKAEGIDTEKRLLIKVASTWEGIEAARTLEQKGIRTNLTLLFSFAQAVACGAAGVQLISPFVGRIYDWYKKSAGAQWNEAASAGANDPGVKSVRQIFEYYKQHGIKTEVMGASFRNVGQIRALAGCDLLTISPELLAELAASNEPLAHALDAKAATGGDVAKVSYDEAGFRFALNEDAMATEKLAEGIRAFAADAVKLEKLMQESGK.

The Schiff-base intermediate with substrate role is filled by lysine 126.

This sequence belongs to the transaldolase family. Type 1 subfamily. As to quaternary structure, homodimer.

The protein localises to the cytoplasm. The catalysed reaction is D-sedoheptulose 7-phosphate + D-glyceraldehyde 3-phosphate = D-erythrose 4-phosphate + beta-D-fructose 6-phosphate. Its pathway is carbohydrate degradation; pentose phosphate pathway; D-glyceraldehyde 3-phosphate and beta-D-fructose 6-phosphate from D-ribose 5-phosphate and D-xylulose 5-phosphate (non-oxidative stage): step 2/3. Its function is as follows. Transaldolase is important for the balance of metabolites in the pentose-phosphate pathway. This Variovorax paradoxus (strain S110) protein is Transaldolase.